The following is a 101-amino-acid chain: Immunity protein CdiI-2 (101 aa).

As to quaternary structure, specifically interacts with the truncated CT fragment of cognate toxin protein CdiA-2, which inhibits CdiA-2 tRNA nuclease activity.

Immunity protein component of a toxin-immunity protein module, which functions as a cellular contact-dependent growth inhibition (CDI) system. CDI modules allow bacteria to communicate with and inhibit the growth of closely related neighboring bacteria in a contact-dependent fashion. Neutralizes the toxic activity of cognate toxin CdiA (C-terminal 301 residue CT fragment) upon expression in E.coli. Does not inhibit toxic activity of CdiA from other strains of B.pseudomallei. Functionally, expression of this cdiAIB locus in B.thailandensis confers protection against other bacteria carrying the locus; growth inhibition requires cellular contact. This chain is Immunity protein CdiI-2 (cdiI2), found in Burkholderia pseudomallei (strain 1026b).